The primary structure comprises 355 residues: UDP-N-acetylglucosamine--N-acetylmuramyl-(pentapeptide) pyrophosphoryl-undecaprenol N-acetylglucosamine transferase (355 aa).

UDP-N-acetyl-alpha-D-glucosamine contacts are provided by residues 15–17 (TGG), Asn-127, Arg-163, Ser-191, Ile-244, 263–268 (ALTVSE), and Gln-288.

The protein belongs to the glycosyltransferase 28 family. MurG subfamily.

It is found in the cell inner membrane. The enzyme catalyses di-trans,octa-cis-undecaprenyl diphospho-N-acetyl-alpha-D-muramoyl-L-alanyl-D-glutamyl-meso-2,6-diaminopimeloyl-D-alanyl-D-alanine + UDP-N-acetyl-alpha-D-glucosamine = di-trans,octa-cis-undecaprenyl diphospho-[N-acetyl-alpha-D-glucosaminyl-(1-&gt;4)]-N-acetyl-alpha-D-muramoyl-L-alanyl-D-glutamyl-meso-2,6-diaminopimeloyl-D-alanyl-D-alanine + UDP + H(+). The protein operates within cell wall biogenesis; peptidoglycan biosynthesis. Its function is as follows. Cell wall formation. Catalyzes the transfer of a GlcNAc subunit on undecaprenyl-pyrophosphoryl-MurNAc-pentapeptide (lipid intermediate I) to form undecaprenyl-pyrophosphoryl-MurNAc-(pentapeptide)GlcNAc (lipid intermediate II). This chain is UDP-N-acetylglucosamine--N-acetylmuramyl-(pentapeptide) pyrophosphoryl-undecaprenol N-acetylglucosamine transferase, found in Salmonella choleraesuis (strain SC-B67).